We begin with the raw amino-acid sequence, 146 residues long: Decoration protein (146 aa).

In terms of assembly, homotrimer. Interacts with the major capsid protein.

It localises to the virion. Its function is as follows. Cooperatively binds the expanded capsid, thereby stabilizing the mature capsid shell and allowing the large viral DNA to be packaged. Trimers of capsid decoration proteins molecules are located at local and icosahedral threefold axes and stabilize the expanded capsid, which shows increased spacing between capsomers. In Thermus thermophilus (Thermus thermophilus phage P23-45), this protein is Decoration protein.